Here is a 228-residue protein sequence, read N- to C-terminus: uncharacterized protein (228 aa).

A coiled-coil region spans residues 196 to 228 (VKITELLDKAKISINDLNKTIEKLNETVNKYHG).

This is an uncharacterized protein from Acanthamoeba polyphaga (Amoeba).